The primary structure comprises 338 residues: Sulfotransferase 2B1 (338 aa).

67–72 is a 3'-phosphoadenylyl sulfate binding site; sequence KSGTNW. Trp95 and Trp100 together coordinate substrate. The Proton acceptor role is filled by His122. Residues Arg144, Ser152, Tyr207, 241–246, and 271–273 each bind 3'-phosphoadenylyl sulfate; these read SAFAAM and RKG. Residues 301-338 form a disordered region; sequence VQRFPWDTSEEDSSPDGQPDPEPSPSPASDDPNPGSSQ. Residues 327–338 show a composition bias toward low complexity; the sequence is PASDDPNPGSSQ.

Belongs to the sulfotransferase 1 family. Expressed at high levels in epididymis, intestine and uterus, and low levels in brain and hypothalamus. Isoform 2 is most prominent in the brain and spinal cord, with modest expression in the lung, skin and spleen. Isoform 1 is most prominently expressed in skin and small intestine, with modest expression in muscle and prostate.

The protein resides in the cytoplasm. The protein localises to the cytosol. It localises to the microsome. Its subcellular location is the nucleus. The enzyme catalyses an alcohol + 3'-phosphoadenylyl sulfate = an alkyl sulfate + adenosine 3',5'-bisphosphate + H(+). It carries out the reaction pregnenolone + 3'-phosphoadenylyl sulfate = pregnenolone sulfate + adenosine 3',5'-bisphosphate + H(+). It catalyses the reaction 3beta-hydroxyandrost-5-en-17-one + 3'-phosphoadenylyl sulfate = dehydroepiandrosterone 3-sulfate + adenosine 3',5'-bisphosphate + H(+). The catalysed reaction is cholesterol + 3'-phosphoadenylyl sulfate = cholesterol sulfate + adenosine 3',5'-bisphosphate + H(+). Functionally, sulfotransferase that utilizes 3'-phospho-5'-adenylyl sulfate (PAPS) as sulfonate donor to catalyze the sulfate conjugation. Preferentially sulfonates cholesterol. Catalyzes sulfation of the 3beta-hydroxyl groups of steroids, such as, pregnenolone and dehydroepiandrosterone (DHEA). Cholesterol sulfation is approximately 10-fold higher than for pregnenolone and 20-fold higher than for DHEA. Plays a role in epidermal cholesterol metabolism and in the regulation of epidermal proliferation and differentiation. Strongly sulfonates pregnenolone, however is capable to sulfonate cholesterol with a high degree of efficiency. DHEA is a relatively poor substrate. The polypeptide is Sulfotransferase 2B1 (Sult2b1) (Mus musculus (Mouse)).